The chain runs to 263 residues: uncharacterized protein (263 aa).

The first 22 residues, 1-22 (MRYLKRVVLYRIVMVLSVFIIG), serve as a signal peptide directing secretion. Cysteine 23 is lipidated: N-palmitoyl cysteine. A lipid anchor (S-diacylglycerol cysteine) is attached at cysteine 23.

The protein belongs to the staphylococcal tandem lipoprotein family.

The protein localises to the cell membrane. This is an uncharacterized protein from Staphylococcus aureus (strain bovine RF122 / ET3-1).